The sequence spans 275 residues: NH(3)-dependent NAD(+) synthetase (275 aa).

Residue 47-54 coordinates ATP; the sequence is GISGGQDS. Asp-53 is a Mg(2+) binding site. Arg-139 is a deamido-NAD(+) binding site. Thr-159 contacts ATP. Glu-164 contacts Mg(2+). The deamido-NAD(+) site is built by Lys-172 and Asp-179. The ATP site is built by Lys-188 and Thr-210. Deamido-NAD(+) is bound at residue 259 to 260; the sequence is HK.

It belongs to the NAD synthetase family. In terms of assembly, homodimer.

It catalyses the reaction deamido-NAD(+) + NH4(+) + ATP = AMP + diphosphate + NAD(+) + H(+). Its pathway is cofactor biosynthesis; NAD(+) biosynthesis; NAD(+) from deamido-NAD(+) (ammonia route): step 1/1. Its function is as follows. Catalyzes the ATP-dependent amidation of deamido-NAD to form NAD. Uses ammonia as a nitrogen source. The protein is NH(3)-dependent NAD(+) synthetase of Staphylococcus epidermidis (strain ATCC 35984 / DSM 28319 / BCRC 17069 / CCUG 31568 / BM 3577 / RP62A).